The primary structure comprises 873 residues: Probable beta-glucosidase A (873 aa).

The first 19 residues, 1–19 (MRFGWLEVAALTAASVANA), serve as a signal peptide directing secretion. Residues Asn-71, Asn-222, and Asn-263 are each glycosylated (N-linked (GlcNAc...) asparagine). Asp-291 is an active-site residue. Asn-326, Asn-333, Asn-365, Asn-453, Asn-534, Asn-553, Asn-575, Asn-679, and Asn-725 each carry an N-linked (GlcNAc...) asparagine glycan. A disordered region spans residues 730–765 (EDSSDDPNYGWEDSEYIPEGARDGSPQPLLKAGGAP).

The protein belongs to the glycosyl hydrolase 3 family.

The protein localises to the secreted. It catalyses the reaction Hydrolysis of terminal, non-reducing beta-D-glucosyl residues with release of beta-D-glucose.. Its pathway is glycan metabolism; cellulose degradation. Its function is as follows. Beta-glucosidases are one of a number of cellulolytic enzymes involved in the degradation of cellulosic biomass. Catalyzes the last step releasing glucose from the inhibitory cellobiose. In Neosartorya fischeri (strain ATCC 1020 / DSM 3700 / CBS 544.65 / FGSC A1164 / JCM 1740 / NRRL 181 / WB 181) (Aspergillus fischerianus), this protein is Probable beta-glucosidase A (bglA).